The sequence spans 433 residues: Trigger factor (433 aa).

In terms of domain architecture, PPIase FKBP-type spans G163–P248.

It belongs to the FKBP-type PPIase family. Tig subfamily.

It is found in the cytoplasm. The enzyme catalyses [protein]-peptidylproline (omega=180) = [protein]-peptidylproline (omega=0). Involved in protein export. Acts as a chaperone by maintaining the newly synthesized protein in an open conformation. Functions as a peptidyl-prolyl cis-trans isomerase. In Nitratidesulfovibrio vulgaris (strain DP4) (Desulfovibrio vulgaris), this protein is Trigger factor.